The sequence spans 175 residues: ADP-ribosylation factor 6 (175 aa).

Glycine 2 carries the N-myristoyl glycine lipid modification. GTP-binding positions include 20 to 27 (GLDAAGKT), 63 to 67 (DVGGQ), and 122 to 125 (NKQD).

This sequence belongs to the small GTPase superfamily. Arf family. As to expression, expressed in the head (at protein level).

Its subcellular location is the golgi apparatus. With respect to regulation, activation is generally mediated by a guanine exchange factor (GEF), while inactivation through hydrolysis of bound GTP is catalyzed by a GTPase activating protein (GAP). May be activated by Efa6. In terms of biological role, GTP-binding protein involved in protein trafficking; may modulate vesicle budding and uncoating within the Golgi apparatus. Promotes cell movement and remodeling of the actin cytoskeleton during compound eye morphogenesis. Required for normal ethanol-induced tolerance and preference. Probably after Efa6-mediated activation, counteracts ethanol-induced sedation. The polypeptide is ADP-ribosylation factor 6 (Drosophila melanogaster (Fruit fly)).